We begin with the raw amino-acid sequence, 113 residues long: Ribonuclease P protein component (113 aa).

Belongs to the RnpA family. As to quaternary structure, consists of a catalytic RNA component (M1 or rnpB) and a protein subunit.

The catalysed reaction is Endonucleolytic cleavage of RNA, removing 5'-extranucleotides from tRNA precursor.. RNaseP catalyzes the removal of the 5'-leader sequence from pre-tRNA to produce the mature 5'-terminus. It can also cleave other RNA substrates such as 4.5S RNA. The protein component plays an auxiliary but essential role in vivo by binding to the 5'-leader sequence and broadening the substrate specificity of the ribozyme. The sequence is that of Ribonuclease P protein component from Geotalea uraniireducens (strain Rf4) (Geobacter uraniireducens).